Consider the following 81-residue polypeptide: Penaeidin-3c (81 aa).

An N-terminal signal peptide occupies residues 1–19; that stretch reads MRLVVCLVFLASFALVCQG. The residue at position 20 (Gln20) is a Pyrrolidone carboxylic acid. Disulfide bonds link Cys50-Cys65, Cys54-Cys72, and Cys66-Cys73. Residue Ser80 is modified to Serine amide.

The protein belongs to the penaeidin family. As to expression, higher expression in hemocytes and to a lesser extent in heart, testis, gills, intestine, lymphoid organ and hepatopancreas. Traces in eyes and subcuticular epithelium. Not present in the brain.

The protein resides in the cytoplasmic granule. Antibacterial activity against M.luteus and E.coli bacteria. Antifungal activity against N.crassa and F.oxysporum. Presents chitin-binding activity. The chain is Penaeidin-3c from Penaeus vannamei (Whiteleg shrimp).